The chain runs to 421 residues: Ankyrin repeat domain-containing protein 61 (421 aa).

ANK repeat units follow at residues T27 to L57, Q74 to V103, Q107 to L146, N166 to A195, S199 to C228, T233 to A272, E276 to I305, and N309 to L342.

The protein is Ankyrin repeat domain-containing protein 61 (Ankrd61) of Mus musculus (Mouse).